Consider the following 820-residue polypeptide: Leucine--tRNA ligase (820 aa).

A 'HIGH' region motif is present at residues 42–52 (PYPSGDLHMGH). A 'KMSKS' region motif is present at residues 576 to 580 (KMSKS). Lysine 579 is a binding site for ATP.

The protein belongs to the class-I aminoacyl-tRNA synthetase family.

Its subcellular location is the cytoplasm. The enzyme catalyses tRNA(Leu) + L-leucine + ATP = L-leucyl-tRNA(Leu) + AMP + diphosphate. The sequence is that of Leucine--tRNA ligase from Coxiella burnetii (strain Dugway 5J108-111).